The following is a 301-amino-acid chain: uncharacterized protein (301 aa).

The span at 16 to 28 (EITEESEKTKTDL) shows a compositional bias: basic and acidic residues. A disordered region spans residues 16–38 (EITEESEKTKTDLQKANTPNKTE). Over residues 29-38 (QKANTPNKTE) the composition is skewed to polar residues. The 50-residue stretch at 252–301 (KENVALKMLQRCGWKEGQGLGQHNQGIINPLHVEISGFVTETKHSKINDK) folds into the G-patch domain.

This is an uncharacterized protein from Schizosaccharomyces pombe (strain 972 / ATCC 24843) (Fission yeast).